Consider the following 504-residue polypeptide: Ribonuclease Y (504 aa).

A helical transmembrane segment spans residues 2–22; that stretch reads TTSIVIGVVLVTVGLTFGWTI. The 86-residue stretch at 194–279 folds into the KH domain; the sequence is TVSTVNLPSE…EIVQKVTQEV (86 aa). One can recognise an HD domain in the interval 320–413; it reads VLYHSKEVAL…VQVADAISAA (94 aa).

The protein belongs to the RNase Y family.

It localises to the cell membrane. Its function is as follows. Endoribonuclease that initiates mRNA decay. The sequence is that of Ribonuclease Y from Treponema pallidum (strain Nichols).